We begin with the raw amino-acid sequence, 53 residues long: MVFEDVFVFFYIGLKNKFLFFIFYFLFFFIFFTVFGNLNFLGNEGLKCFYIVI.

Residues 18-38 traverse the membrane as a helical segment; the sequence is FLFFIFYFLFFFIFFTVFGNL.

The protein localises to the membrane. This is an uncharacterized protein from Dictyostelium discoideum (Social amoeba).